The following is a 149-amino-acid chain: Transcriptional regulator MraZ (149 aa).

SpoVT-AbrB domains follow at residues 7-54 (KYIN…GIAH) and 83-126 (AVQL…QPQN).

The protein belongs to the MraZ family. As to quaternary structure, forms oligomers.

Its subcellular location is the cytoplasm. The protein localises to the nucleoid. The protein is Transcriptional regulator MraZ of Rickettsia typhi (strain ATCC VR-144 / Wilmington).